Consider the following 350-residue polypeptide: UDP-3-O-acylglucosamine N-acyltransferase (350 aa).

Catalysis depends on histidine 257, which acts as the Proton acceptor.

It belongs to the transferase hexapeptide repeat family. LpxD subfamily. As to quaternary structure, homotrimer.

It carries out the reaction a UDP-3-O-[(3R)-3-hydroxyacyl]-alpha-D-glucosamine + a (3R)-hydroxyacyl-[ACP] = a UDP-2-N,3-O-bis[(3R)-3-hydroxyacyl]-alpha-D-glucosamine + holo-[ACP] + H(+). The protein operates within bacterial outer membrane biogenesis; LPS lipid A biosynthesis. Catalyzes the N-acylation of UDP-3-O-acylglucosamine using 3-hydroxyacyl-ACP as the acyl donor. Is involved in the biosynthesis of lipid A, a phosphorylated glycolipid that anchors the lipopolysaccharide to the outer membrane of the cell. This chain is UDP-3-O-acylglucosamine N-acyltransferase, found in Chelativorans sp. (strain BNC1).